The primary structure comprises 583 residues: Aspartate--tRNA ligase (583 aa).

Glu-174 provides a ligand contact to L-aspartate. The interval 198 to 201 is aspartate; that stretch reads QITK. Residue Arg-220 coordinates L-aspartate. ATP-binding positions include 220-222 and Gln-229; that span reads RDE. L-aspartate is bound at residue His-443. An ATP-binding site is contributed by Glu-477. Arg-484 contributes to the L-aspartate binding site. 529–532 is a binding site for ATP; the sequence is GLDR.

The protein belongs to the class-II aminoacyl-tRNA synthetase family. Type 1 subfamily. In terms of assembly, homodimer.

Its subcellular location is the cytoplasm. The catalysed reaction is tRNA(Asp) + L-aspartate + ATP = L-aspartyl-tRNA(Asp) + AMP + diphosphate. In terms of biological role, catalyzes the attachment of L-aspartate to tRNA(Asp) in a two-step reaction: L-aspartate is first activated by ATP to form Asp-AMP and then transferred to the acceptor end of tRNA(Asp). The sequence is that of Aspartate--tRNA ligase from Streptococcus suis (strain 98HAH33).